Here is a 122-residue protein sequence, read N- to C-terminus: MIQPQTYLRVADNTGARELMCIRVLGGGKQRAATVGDIIIAVVKDATPNMPVKRSDIVRAVIVRTRKNVRRVNGTSIRFDENAAVIINKENNPRGTRVFGPVARELRDGNFTKIISLAPEVL.

It belongs to the universal ribosomal protein uL14 family. As to quaternary structure, part of the 50S ribosomal subunit.

The protein localises to the plastid. Its subcellular location is the chloroplast. Its function is as follows. Binds to 23S rRNA. This chain is Large ribosomal subunit protein uL14c, found in Chlorella vulgaris (Green alga).